A 202-amino-acid chain; its full sequence is Solute carrier family 66 member 3 (202 aa).

An N-terminal signal peptide occupies residues 1–19; the sequence is MEAGLLWFCNWSTLGVCAA. The next 4 helical transmembrane spans lie at 33–53, 64–84, 94–114, and 171–191; these read SARG…LVFL, LTYL…LFVF, LPYM…KWII, and LTIL…TATV.

Its subcellular location is the membrane. The polypeptide is Solute carrier family 66 member 3 (Slc66a3) (Mus musculus (Mouse)).